Here is a 319-residue protein sequence, read N- to C-terminus: CCAAT/enhancer-binding protein homolog 1 (319 aa).

A n' domain; required for axon regeneration region spans residues 53–67; that stretch reads SLTIAASLQQRDRER. Residues 163 to 319 form a disordered region; it reads TRRAVKRPVP…QRHILENFNK (157 aa). Positions 171-181 are enriched in basic and acidic residues; the sequence is VPYDDYQKEYS. The span at 182-198 shows a compositional bias: acidic residues; the sequence is EESSDMTDNDGSVDDSY. 4 stretches are compositionally biased toward basic and acidic residues: residues 225–248, 255–274, 281–291, and 302–319; these read LKAD…DAVR, KELQ…RIAE, SERDARRRDQD, and PMKE…NFNK. Positions 233–308 constitute a bZIP domain; that stretch reads EPTYKLKRAR…NKGPMKEQRM (76 aa). A basic motif region spans residues 237–271; that stretch reads KLKRARNNDAVRKSRKKAKELQDKKEAEHDKMKRR. The leucine-zipper stretch occupies residues 275–308; sequence LEGLLQSERDARRRDQDTLEQLLRNKGPMKEQRM.

Belongs to the bZIP family. C/EBP subfamily. As to quaternary structure, may interact with transcription factor ets-4. May interact (via N-terminus) with nipi-3. May interact (via N-terminus) with importin subunit alpha ima-3. As to expression, expressed in touch and motor neurons.

The protein localises to the synapse. Its subcellular location is the cytoplasm. It localises to the nucleus. The protein resides in the cell projection. It is found in the axon. In terms of biological role, transcription factor. Binds to promoter regions of target genes, perhaps at the motif 5'-[AGCT]TT[AGT][TC]GAAA[ACT]-3'. Modulates expression of genes involved in development and in stress responses, including those regulating the p38/MAPK signaling pathways such as MAPKK sek-1 and phosphatase vhp-1. Involved in innate immunity. Plays a role in repressing the response to infection by the Gram-negative bacterium P.aeruginosa, perhaps acting independently of the pmk-1 or pmk-3 p38/MAPK pathways. However, also plays a protective role in the response to infection by P.aeruginosa. Required in axonal regrowth following injury and synaptogenesis. Following axon injury, in concert with transcription factor ets-4, activates expression of receptor tyrosine kinase svh-2. May function downstream of the Ca2+-activated p38/MAPK pathway to promote axon regeneration. Plays a role in modulating polymerization of neuronal microtubules. Involved in modulating lipid homeostasis. In Caenorhabditis elegans, this protein is CCAAT/enhancer-binding protein homolog 1.